A 790-amino-acid polypeptide reads, in one-letter code: Lysine biosynthesis regulatory protein LYS14 (790 aa).

Disordered stretches follow at residues 1 to 50 (MFES…SCFE) and 72 to 157 (FNHK…YSRN). Residues 35–47 (SGSSFTNSGTSTS) show a composition bias toward low complexity. 2 stretches are compositionally biased toward polar residues: residues 75–113 (KQMT…SEQD) and 120–142 (TISQ…TSTV). Residues 159-186 (CSECKRRRMKCDETKPTCWQCARLNRQC) constitute a DNA-binding region (zn(2)-C6 fungal-type). A disordered region spans residues 195-258 (KKRRTSNAQR…PKPITDNGKN (64 aa)). Residues 222 to 239 (ARKRQHSSCKAEKKKKVR) are compositionally biased toward basic residues.

Its subcellular location is the nucleus. Functionally, activates the transcription of lysine biosynthesis genes. This activation is dependent on the inducer alpha-aminoadipate semialdehyde and repressed by lysine. This Saccharomyces cerevisiae (strain ATCC 204508 / S288c) (Baker's yeast) protein is Lysine biosynthesis regulatory protein LYS14 (LYS14).